A 432-amino-acid polypeptide reads, in one-letter code: Trigger factor (432 aa).

The PPIase FKBP-type domain maps to Glu-161 to Pro-246.

The protein belongs to the FKBP-type PPIase family. Tig subfamily.

The protein localises to the cytoplasm. It carries out the reaction [protein]-peptidylproline (omega=180) = [protein]-peptidylproline (omega=0). Its function is as follows. Involved in protein export. Acts as a chaperone by maintaining the newly synthesized protein in an open conformation. Functions as a peptidyl-prolyl cis-trans isomerase. In Salmonella arizonae (strain ATCC BAA-731 / CDC346-86 / RSK2980), this protein is Trigger factor.